Here is a 414-residue protein sequence, read N- to C-terminus: EARP and GARP complex-interacting protein 1 (414 aa).

Residue Met1 is modified to N-acetylmethionine. 4 WD repeats span residues 159–199 (TAHG…SQAV), 209–249 (KGQL…QIYC), 253–293 (AHGQ…EPVK), and 297–337 (EHSH…SEPF). The tract at residues 337 to 362 (FGHLVDDDDISDQEDHRSEEKSKEPL) is disordered. At Ser347 the chain carries Phosphoserine. Positions 349-362 (QEDHRSEEKSKEPL) are enriched in basic and acidic residues. A WD 5 repeat occupies 372-412 (EHEDSVYAVDWSSADPWLFASLSYDGRLVINRVPRALKYHI).

The protein belongs to the WD repeat EIPR1 family. As to quaternary structure, interacts with two multisubunit tethering complexes: EARP composed of VPS50, VPS51, VPS52 and VPS53 subunits and GARP complex composed of VPS51, VPS52, VPS53 and VPS54 subunits. Interacts with SNAP29.

Its subcellular location is the golgi apparatus. It localises to the trans-Golgi network. Functionally, acts as a component of endosomal retrieval machinery that is involved in protein transport from early endosomes to either recycling endosomes or the trans-Golgi network. Mediates the recruitment of Golgi-associated retrograde protein (GARP) complex to the trans-Golgi network and controls early endosome-to-Golgi transport of internalized protein. Promotes the recycling of internalized transferrin receptor (TFRC) to the plasma membrane through interaction with endosome-associated recycling protein (EARP) complex. Controls proper insulin distribution and secretion, and retention of cargo in mature dense core vesicles. Required for the stability of the endosome-associated retrograde protein (EARP) complex subunits and for proper localization and association of EARP with membranes. In Pongo abelii (Sumatran orangutan), this protein is EARP and GARP complex-interacting protein 1.